The chain runs to 130 residues: Fluoride-specific ion channel FluC (130 aa).

4 helical membrane-spanning segments follow: residues 3–23, 39–59, 67–87, and 102–122; these read FVFLWAALGGAIGSSLRYFVG, GTFSVNIIGCFVIGFMGHLAV, FGIFFVTGVLGGFTTFSSYGL, and VSYALGTNILGLTGVAIGWFL. The Na(+) site is built by Gly77 and Thr80.

This sequence belongs to the fluoride channel Fluc/FEX (TC 1.A.43) family.

Its subcellular location is the cell inner membrane. It catalyses the reaction fluoride(in) = fluoride(out). With respect to regulation, na(+) is not transported, but it plays an essential structural role and its presence is essential for fluoride channel function. In terms of biological role, fluoride-specific ion channel. Important for reducing fluoride concentration in the cell, thus reducing its toxicity. This chain is Fluoride-specific ion channel FluC, found in Helicobacter pylori (strain ATCC 700392 / 26695) (Campylobacter pylori).